The primary structure comprises 816 residues: Lon protease (816 aa).

One can recognise a Lon N-terminal domain in the interval 27-221 (LPLLPIRDVV…KVNDLLAREH (195 aa)). 372–379 (GPPGVGKT) contributes to the ATP binding site. One can recognise a Lon proteolytic domain in the interval 608-789 (KNEVGVVNGL…DEVLKLALEK (182 aa)). Catalysis depends on residues Ser-695 and Lys-738. The segment at 795 to 816 (PKGKAKPATPKVVVRPSKEISA) is disordered. Residues 800–809 (KPATPKVVVR) show a composition bias toward low complexity.

It belongs to the peptidase S16 family. In terms of assembly, homohexamer. Organized in a ring with a central cavity.

It is found in the cytoplasm. The catalysed reaction is Hydrolysis of proteins in presence of ATP.. In terms of biological role, ATP-dependent serine protease that mediates the selective degradation of mutant and abnormal proteins as well as certain short-lived regulatory proteins. Required for cellular homeostasis and for survival from DNA damage and developmental changes induced by stress. Degrades polypeptides processively to yield small peptide fragments that are 5 to 10 amino acids long. Binds to DNA in a double-stranded, site-specific manner. The chain is Lon protease from Trichlorobacter lovleyi (strain ATCC BAA-1151 / DSM 17278 / SZ) (Geobacter lovleyi).